The following is a 634-amino-acid chain: Heat shock 70-related protein 1, mitochondrial (634 aa).

Residues 1–20 constitute a mitochondrion transit peptide; the sequence is MFARRVCGSAAASAACLARH. Residues 538 to 614 adopt a coiled-coil conformation; the sequence is SEQHAEADRV…AAATDKLQKA (77 aa).

The protein belongs to the heat shock protein 70 family.

Its subcellular location is the mitochondrion. In Leishmania major, this protein is Heat shock 70-related protein 1, mitochondrial (HSP70.1).